Reading from the N-terminus, the 678-residue chain is Platelet endothelial cell adhesion molecule (678 aa).

Positions 1–17 (MLLALLLTMLLYASLQA) are cleaved as a signal peptide. Residues 18-589 (QENSFTINSI…VRVFLAPWKK (572 aa)) are Extracellular-facing. 6 Ig-like C2-type domains span residues 40–126 (GQKL…PEVT), 135–213 (GGIV…FIRS), 225–309 (PKFQ…ILVN), 315–391 (PRPK…LVPV), 413–472 (GQII…NCHS), and 488–577 (PVDE…RSGP). Cysteines 47 and 99 form a disulfide. Asn-74 and Asn-141 each carry an N-linked (GlcNAc...) asparagine glycan. 2 disulfides stabilise this stretch: Cys-142/Cys-195 and Cys-245/Cys-293. N-linked (GlcNAc...) asparagine glycosylation is found at Asn-309, Asn-345, Asn-360, Asn-424, and Asn-540. 3 disulfide bridges follow: Cys-336/Cys-375, Cys-420/Cys-465, and Cys-512/Cys-561. A helical membrane pass occupies residues 590–610 (GLIAVVVIGVVIAALIVAAKY). At 611–678 (YFLRKAKAKQ…EPHQENGRLP (68 aa)) the chain is on the cytoplasmic side. Residues 634-653 (NSNSEKVSEPSVETNSHYDS) form a disordered region. The short motif at 658–663 (VEYTEV) is the ITIM motif element. Tyr-660 is subject to Phosphotyrosine; by FER.

Trans-homodimer (via Ig-like C2-type 1 and Ig-like C2-type 2 domains); trans-homodimerization is required for cell-cell interaction. Forms a complex with BDKRB2 and GNAQ. Interacts with BDKRB2 and GNAQ. Interacts with PTPN11. Interacts with FER. Interacts with CD177; the interaction is Ca(2+)-dependent; the interaction is direct. In terms of processing, phosphorylated on Ser and Tyr residues after cellular activation. In endothelial cells Fyn mediates mechanical-force (stretch or pull) induced tyrosine phosphorylation. Phosphorylated on tyrosine residues by FER and FES in response to FCER1 activation. Palmitoylation by ZDHHC21 is necessary for cell surface expression in endothelial cells and enrichment in membrane rafts.

It localises to the cell membrane. It is found in the membrane raft. Its subcellular location is the cell junction. Its function is as follows. Cell adhesion molecule which is required for leukocyte transendothelial migration (TEM) under most inflammatory conditions. Tyr-660 plays a critical role in TEM and is required for efficient trafficking of PECAM1 to and from the lateral border recycling compartment (LBRC) and is also essential for the LBRC membrane to be targeted around migrating leukocytes. Trans-homophilic interaction may play a role in endothelial cell-cell adhesion via cell junctions. Heterophilic interaction with CD177 plays a role in transendothelial migration of neutrophils. Homophilic ligation of PECAM1 prevents macrophage-mediated phagocytosis of neighboring viable leukocytes by transmitting a detachment signal. Promotes macrophage-mediated phagocytosis of apoptotic leukocytes by tethering them to the phagocytic cells; PECAM1-mediated detachment signal appears to be disabled in apoptotic leukocytes. Modulates bradykinin receptor BDKRB2 activation. Regulates bradykinin- and hyperosmotic shock-induced ERK1/2 activation in endothelial cells. Induces susceptibility to atherosclerosis. The protein is Platelet endothelial cell adhesion molecule (Pecam1) of Rattus norvegicus (Rat).